We begin with the raw amino-acid sequence, 947 residues long: Protein RRC1-like (947 aa).

Basic and acidic residues predominate over residues 1–11; that stretch reads MVKDEFFLDHP. Disordered regions lie at residues 1 to 35 and 63 to 167; these read MVKDEFFLDHPGRKHRSRNTEKKKKPRRRERRMKQ and PNDN…DELP. Positions 12 to 34 are enriched in basic residues; that stretch reads GRKHRSRNTEKKKKPRRRERRMK. Composition is skewed to basic and acidic residues over residues 66–84 and 104–155; these read NKLKPDSQGEKSRDGDSIS and KGPE…DHNS. The RRM domain maps to 187–268; the sequence is TNLYVVNLSS…YELKIGWGKV (82 aa). Residues 336-379 form an SURP motif repeat; sequence IIDTMALNVLDGGCAFEQAIMERGRGNPLFNFLFELGSKEHTYY. Positions 412 to 434 are disordered; sequence PPLPATRSPEHGKESRGTYAAGK. The CID domain maps to 444–589; the sequence is LTDSQRDEFE…GLRATFLRSR (146 aa). The SAP domain maps to 638–672; sequence LMNRPISELERRCRHNGLSLLGGREMMVARLVCLK. Disordered regions lie at residues 752 to 797 and 846 to 947; these read REDD…PENE and GLSG…RGMR. Composition is skewed to basic and acidic residues over residues 854–876, 888–916, and 924–947; these read LPEKREKREDSRDSSRKRNRSES, LTRERVRDHDLDKDRHRDRDRQQHDLDKD, and SSRERDDHDRSRERDRDWRRRGMR.

As to expression, expressed in leaves, inflorescence stems, roots, flower buds, open flowers and siliques.

In terms of biological role, probable SR-like splicing factor. The chain is Protein RRC1-like from Arabidopsis thaliana (Mouse-ear cress).